The sequence spans 338 residues: MNLQRFSRYPLTFGPTPIQPLKRLSQHLGGKVELYAKREDCNSGLAFGGNKTRKLEYLVPDALAQGADTLVSIGGVQSNQTRQVAAVAAHLGMKCVLVQEHWVNYEDPVYDRVGNIQLSRMMGADVRLVADGFDIGIRRSWEEAMESVRQAGGKPYPIPAGCSEHPLGGLGFVGFAEEVREQEAQLGFKFDYVVVCSVTGSTQAGMVVGFAADGRADRVIGIDASATPERTHEQITRIARHTAELVDLGRPITEADVVLDTRYAGPEYGLPNDGTLEAIRLCARLEGMLTDPVYEGKSMHGMIDKVRRGEFEPGSKVLYAHLGGVPALSAYAEIFRNG.

At Lys51 the chain carries N6-(pyridoxal phosphate)lysine. Ser78 (nucleophile) is an active-site residue.

This sequence belongs to the ACC deaminase/D-cysteine desulfhydrase family. As to quaternary structure, homotrimer. The cofactor is pyridoxal 5'-phosphate.

The catalysed reaction is 1-aminocyclopropane-1-carboxylate + H2O = 2-oxobutanoate + NH4(+). Functionally, catalyzes a cyclopropane ring-opening reaction, the irreversible conversion of 1-aminocyclopropane-1-carboxylate (ACC) to ammonia and alpha-ketobutyrate. Allows growth on ACC as a nitrogen source. The sequence is that of 1-aminocyclopropane-1-carboxylate deaminase from Burkholderia ambifaria (strain ATCC BAA-244 / DSM 16087 / CCUG 44356 / LMG 19182 / AMMD) (Burkholderia cepacia (strain AMMD)).